Here is a 335-residue protein sequence, read N- to C-terminus: Nucleoid-associated protein YejK (335 aa).

Belongs to the YejK family.

It is found in the cytoplasm. It localises to the nucleoid. The polypeptide is Nucleoid-associated protein YejK (Escherichia coli (strain K12 / MC4100 / BW2952)).